The sequence spans 202 residues: MAVWREPKPLILASQSRVRQALLANAGLSFEAIPAAIDERAIQRSCGLTSGAEIAVRLACEKARYVSLRSPGRYVIGADQTLECDGRLFNKPDGRVGAAEHLRALSGRTHALHAAVAIVRDGRQLFEYVSVARMTMRELSEDTIEAYLNAAGDEVTASVGAYQLENLGVHLFSRVEGDHFSILGLPLLPLLAFLRSQGLLSL.

Aspartate 79 functions as the Proton acceptor in the catalytic mechanism.

This sequence belongs to the Maf family. It depends on a divalent metal cation as a cofactor.

Its subcellular location is the cytoplasm. It carries out the reaction a ribonucleoside 5'-triphosphate + H2O = a ribonucleoside 5'-phosphate + diphosphate + H(+). The catalysed reaction is a 2'-deoxyribonucleoside 5'-triphosphate + H2O = a 2'-deoxyribonucleoside 5'-phosphate + diphosphate + H(+). In terms of biological role, nucleoside triphosphate pyrophosphatase. May have a dual role in cell division arrest and in preventing the incorporation of modified nucleotides into cellular nucleic acids. This chain is Nucleoside triphosphate pyrophosphatase, found in Nitrobacter hamburgensis (strain DSM 10229 / NCIMB 13809 / X14).